Reading from the N-terminus, the 198-residue chain is Elongation factor Ts (198 aa).

The segment at 81–84 (TDFV) is involved in Mg(2+) ion dislocation from EF-Tu.

Belongs to the EF-Ts family.

It is found in the cytoplasm. Functionally, associates with the EF-Tu.GDP complex and induces the exchange of GDP to GTP. It remains bound to the aminoacyl-tRNA.EF-Tu.GTP complex up to the GTP hydrolysis stage on the ribosome. The chain is Elongation factor Ts from Leptospira biflexa serovar Patoc (strain Patoc 1 / Ames).